Consider the following 362-residue polypeptide: Dihydroorotate dehydrogenase (quinone) (362 aa).

FMN contacts are provided by residues 60 to 64 (AGFDK) and Thr-84. Residue Lys-64 participates in substrate binding. Substrate is bound at residue 109 to 113 (NRMGF). The FMN site is built by Asn-137 and Asn-168. A substrate-binding site is contributed by Asn-168. Ser-171 acts as the Nucleophile in catalysis. Asn-173 contributes to the substrate binding site. FMN is bound by residues Lys-213 and Ser-241. 242–243 (NT) provides a ligand contact to substrate. FMN-binding positions include Gly-264, Gly-293, and 314–315 (YS).

Belongs to the dihydroorotate dehydrogenase family. Type 2 subfamily. In terms of assembly, monomer. It depends on FMN as a cofactor.

Its subcellular location is the cell membrane. The enzyme catalyses (S)-dihydroorotate + a quinone = orotate + a quinol. It functions in the pathway pyrimidine metabolism; UMP biosynthesis via de novo pathway; orotate from (S)-dihydroorotate (quinone route): step 1/1. Its function is as follows. Catalyzes the conversion of dihydroorotate to orotate with quinone as electron acceptor. The chain is Dihydroorotate dehydrogenase (quinone) from Bartonella henselae (strain ATCC 49882 / DSM 28221 / CCUG 30454 / Houston 1) (Rochalimaea henselae).